The sequence spans 264 residues: DNA repair protein RecO (264 aa).

The protein belongs to the RecO family.

In terms of biological role, involved in DNA repair and RecF pathway recombination. The polypeptide is DNA repair protein RecO (Prosthecochloris aestuarii (strain DSM 271 / SK 413)).